The sequence spans 151 residues: Cysteine proteinase inhibitor 10 (151 aa).

The signal sequence occupies residues 1–22 (MATSPMLFLVSLLLVLVAAATG). The region spanning 40–109 (GGRTEIRDVG…GVAYYLKVAA (70 aa)) is the Cystatin domain. A Secondary area of contact motif is present at residues 96 to 100 (QVVSG).

This sequence belongs to the cystatin family. Phytocystatin subfamily.

It localises to the secreted. Its function is as follows. Specific inhibitor of cysteine proteinases. Probably involved in the regulation of endogenous processes and in defense against pests and pathogens. This Oryza sativa subsp. indica (Rice) protein is Cysteine proteinase inhibitor 10.